We begin with the raw amino-acid sequence, 464 residues long: Fumarate hydratase class II (464 aa).

Residues 100 to 102 (SGT), 131 to 134 (HPND), 141 to 143 (SSN), and threonine 189 contribute to the substrate site. The active-site Proton donor/acceptor is the histidine 190. Serine 320 is a catalytic residue. Substrate is bound by residues serine 321 and 326–328 (KVN).

The protein belongs to the class-II fumarase/aspartase family. Fumarase subfamily. In terms of assembly, homotetramer.

The protein localises to the cytoplasm. It carries out the reaction (S)-malate = fumarate + H2O. It participates in carbohydrate metabolism; tricarboxylic acid cycle; (S)-malate from fumarate: step 1/1. Its function is as follows. Involved in the TCA cycle. Catalyzes the stereospecific interconversion of fumarate to L-malate. The chain is Fumarate hydratase class II from Deinococcus radiodurans (strain ATCC 13939 / DSM 20539 / JCM 16871 / CCUG 27074 / LMG 4051 / NBRC 15346 / NCIMB 9279 / VKM B-1422 / R1).